The sequence spans 270 residues: 5-deoxy-glucuronate isomerase (270 aa).

Belongs to the isomerase IolB family.

It catalyses the reaction 5-deoxy-D-glucuronate = 5-dehydro-2-deoxy-D-gluconate. It participates in polyol metabolism; myo-inositol degradation into acetyl-CoA; acetyl-CoA from myo-inositol: step 4/7. Involved in the isomerization of 5-deoxy-glucuronate (5DG) to 5-dehydro-2-deoxy-D-gluconate (DKG or 2-deoxy-5-keto-D-gluconate). The protein is 5-deoxy-glucuronate isomerase of Halalkalibacterium halodurans (strain ATCC BAA-125 / DSM 18197 / FERM 7344 / JCM 9153 / C-125) (Bacillus halodurans).